The following is a 509-amino-acid chain: Cytochrome P450 4A10 (509 aa).

The next 2 helical transmembrane spans lie at 11–31 and 121–141; these read FTGSISGFLQVASVLGLLLLL and LLAPWIGYGLLLLNGQPWFQH. Residue Glu320 coordinates heme. Ser439 is modified (phosphoserine). Cys456 lines the heme pocket.

This sequence belongs to the cytochrome P450 family. Heme is required as a cofactor. As to expression, expressed in liver (at protein level) and kidney (at protein level).

Its subcellular location is the endoplasmic reticulum membrane. It is found in the microsome membrane. It catalyses the reaction an omega-methyl-long-chain fatty acid + reduced [NADPH--hemoprotein reductase] + O2 = an omega-hydroxy-long-chain fatty acid + oxidized [NADPH--hemoprotein reductase] + H2O + H(+). The enzyme catalyses dodecanoate + reduced [NADPH--hemoprotein reductase] + O2 = 12-hydroxydodecanoate + oxidized [NADPH--hemoprotein reductase] + H2O + H(+). It carries out the reaction dodecanoate + reduced [NADPH--hemoprotein reductase] + O2 = 11-hydroxydodecanoate + oxidized [NADPH--hemoprotein reductase] + H2O + H(+). The catalysed reaction is tetradecanoate + reduced [NADPH--hemoprotein reductase] + O2 = 14-hydroxytetradecanoate + oxidized [NADPH--hemoprotein reductase] + H2O + H(+). It catalyses the reaction hexadecanoate + reduced [NADPH--hemoprotein reductase] + O2 = 16-hydroxyhexadecanoate + oxidized [NADPH--hemoprotein reductase] + H2O + H(+). The enzyme catalyses (9Z)-octadecenoate + reduced [NADPH--hemoprotein reductase] + O2 = 18-hydroxy-(9Z)-octadecenoate + oxidized [NADPH--hemoprotein reductase] + H2O + H(+). It carries out the reaction (9Z,12Z)-octadecadienoate + reduced [NADPH--hemoprotein reductase] + O2 = 18-hydroxy-(9Z,12Z)-octadecadienoate + oxidized [NADPH--hemoprotein reductase] + H2O + H(+). The catalysed reaction is (9Z,12Z)-octadecadienoate + reduced [NADPH--hemoprotein reductase] + O2 = 17-hydroxy-(9Z,12Z)-octadecadienoate + oxidized [NADPH--hemoprotein reductase] + H2O + H(+). It catalyses the reaction (5Z,8Z,11Z,14Z)-eicosatetraenoate + reduced [NADPH--hemoprotein reductase] + O2 = 20-hydroxy-(5Z,8Z,11Z,14Z)-eicosatetraenoate + oxidized [NADPH--hemoprotein reductase] + H2O + H(+). The enzyme catalyses 8,9-epoxy-(5Z,11Z,14Z)-eicosatrienoate + reduced [NADPH--hemoprotein reductase] + O2 = 20-hydroxy-8,9-epoxy-(5Z,11Z,14Z)-eicosatrienoate + oxidized [NADPH--hemoprotein reductase] + H2O + H(+). Functionally, a cytochrome P450 monooxygenase involved in the metabolism of fatty acids. Catalyzes predominantly the oxidation of the terminal carbon (omega-oxidation) of long-chain fatty acids. Acts as a major omega-hydroxylase for dodecanoic (lauric) acid in liver. In kidney, may play an important role in omega-hydroxylation of (5Z,8Z,11Z,14Z)-eicosatetraenoic acid (arachidonate) to 20-hydroxyeicosatetraenoic acid (20-HETE), a signaling molecule acting both as vasoconstrictive and natriuretic with overall effect on arterial blood pressure. Also participates in the formation of anti-inflammatory hydroxyepoxyeicosatrienoic acids (HEETs) in kidney by converting 8,9-epoxyeicosatrienoic acid (EET) to 20,8,9-HEET, an activator of PPARA. Displays substantially lower fatty acid omega-1 hydroxylase activity. Mechanistically, uses molecular oxygen inserting one oxygen atom into a substrate, and reducing the second into a water molecule, with two electrons provided by NADPH via cytochrome P450 reductase (CPR; NADPH-ferrihemoprotein reductase). The chain is Cytochrome P450 4A10 (Cyp4a10) from Rattus norvegicus (Rat).